Consider the following 201-residue polypeptide: Inner membrane protein YnbA (201 aa).

Over 1–43 (MTLYQIKPLFQSLLRPTMFWLYKHHVTANHITLAALALSLLTG) the chain is Periplasmic. A helical membrane pass occupies residues 44–64 (LLLMLAAQPILFLLLPIVLFI). Over 65–84 (RMALNALDGMLARECNQQTR) the chain is Cytoplasmic. A helical membrane pass occupies residues 85–107 (LGAILNETGDVISDIALYLPFLF). Topologically, residues 108–116 (LPESNASLV) are periplasmic. The chain crosses the membrane as a helical span at residues 117 to 139 (ILMLFCTILTEFCGLLAQTINGV). Topologically, residues 140 to 151 (RSYAGPFGKSDR) are cytoplasmic. The helical transmembrane segment at 152-172 (ALIFGLWGLAVAIYPQWMQWN) threads the bilayer. The Periplasmic portion of the chain corresponds to 173-175 (NLL). Residues 176 to 196 (WSIASILLLWTAINRCRSVLL) form a helical membrane-spanning segment. At 197–201 (MSAEI) the chain is on the cytoplasmic side.

The protein resides in the cell inner membrane. The polypeptide is Inner membrane protein YnbA (ynbA) (Escherichia coli (strain K12)).